The following is a 65-amino-acid chain: Large ribosomal subunit protein bL33c (65 aa).

This sequence belongs to the bacterial ribosomal protein bL33 family.

It is found in the plastid. The protein resides in the chloroplast. The sequence is that of Large ribosomal subunit protein bL33c from Gracilaria tenuistipitata var. liui (Red alga).